Consider the following 167-residue polypeptide: 6,7-dimethyl-8-ribityllumazine synthase (167 aa).

5-amino-6-(D-ribitylamino)uracil contacts are provided by residues Phe-26, 60 to 62 (AFE), and 89 to 91 (AVI). 94-95 (ET) contacts (2S)-2-hydroxy-3-oxobutyl phosphate. His-97 serves as the catalytic Proton donor. Residue Phe-122 coordinates 5-amino-6-(D-ribitylamino)uracil. Residue Arg-136 participates in (2S)-2-hydroxy-3-oxobutyl phosphate binding.

Belongs to the DMRL synthase family. In terms of assembly, forms an icosahedral capsid composed of 60 subunits, arranged as a dodecamer of pentamers.

The enzyme catalyses (2S)-2-hydroxy-3-oxobutyl phosphate + 5-amino-6-(D-ribitylamino)uracil = 6,7-dimethyl-8-(1-D-ribityl)lumazine + phosphate + 2 H2O + H(+). It functions in the pathway cofactor biosynthesis; riboflavin biosynthesis; riboflavin from 2-hydroxy-3-oxobutyl phosphate and 5-amino-6-(D-ribitylamino)uracil: step 1/2. Its function is as follows. Catalyzes the formation of 6,7-dimethyl-8-ribityllumazine by condensation of 5-amino-6-(D-ribitylamino)uracil with 3,4-dihydroxy-2-butanone 4-phosphate. This is the penultimate step in the biosynthesis of riboflavin. This is 6,7-dimethyl-8-ribityllumazine synthase from Vesicomyosocius okutanii subsp. Calyptogena okutanii (strain HA).